The sequence spans 193 residues: dCTP deaminase (193 aa).

DCTP-binding positions include 110–115 (RSSLAR), Asp128, 136–138 (VLE), Tyr171, Lys178, and Gln182. Glu138 (proton donor/acceptor) is an active-site residue.

Belongs to the dCTP deaminase family. As to quaternary structure, homotrimer.

It catalyses the reaction dCTP + H2O + H(+) = dUTP + NH4(+). The protein operates within pyrimidine metabolism; dUMP biosynthesis; dUMP from dCTP (dUTP route): step 1/2. Its function is as follows. Catalyzes the deamination of dCTP to dUTP. The sequence is that of dCTP deaminase from Tolumonas auensis (strain DSM 9187 / NBRC 110442 / TA 4).